Reading from the N-terminus, the 2062-residue chain is Protein Ycf2 (2062 aa).

2 disordered regions span residues 176–197 (NKKDEMISENQGPPSKTHLENN) and 997–1018 (GRSTLSNSSKEEQKIKPSPHFN). An ATP-binding site is contributed by 1372–1379 (GPMGTGRS).

The protein belongs to the Ycf2 family.

The protein resides in the plastid. It is found in the chloroplast stroma. Its function is as follows. Probable ATPase of unknown function. Its presence in a non-photosynthetic plant (Epifagus virginiana) and experiments in tobacco indicate that it has an essential function which is probably not related to photosynthesis. This Pinus koraiensis (Korean pine) protein is Protein Ycf2 (ycf2).